We begin with the raw amino-acid sequence, 442 residues long: Probable diguanylate cyclase DgcI (442 aa).

A signal peptide spans 1-23; it reads MSRINKFVLTVSLLIFIMISAVA. Cysteine 24 carries N-palmitoyl cysteine lipidation. Residue cysteine 24 is the site of S-diacylglycerol cysteine attachment. Residues 231 to 251 form a helical membrane-spanning segment; sequence LIIFFAALVAVISGASCLYLV. Residues 319 to 442 enclose the GGDEF domain; the sequence is KGGYLCLFDV…KNGRAQISWQ (124 aa). Position 327 (aspartate 327) interacts with Mg(2+). Asparagine 335, histidine 340, and aspartate 344 together coordinate substrate. A Mg(2+)-binding site is contributed by aspartate 371.

In terms of assembly, homodimer. Requires Mg(2+) as cofactor.

The protein resides in the cell membrane. The enzyme catalyses 2 GTP = 3',3'-c-di-GMP + 2 diphosphate. The protein operates within purine metabolism; 3',5'-cyclic di-GMP biosynthesis. Catalyzes the synthesis of cyclic-di-GMP (c-di-GMP) via the condensation of 2 GTP molecules. The chain is Probable diguanylate cyclase DgcI from Escherichia coli (strain K12).